The sequence spans 1321 residues: C-Jun-amino-terminal kinase-interacting protein 4 (1321 aa).

Met-1 carries the N-acetylmethionine modification. Residues 7–95 (VVYQEEPGGS…ITQYEREKAL (89 aa)) form the RH1 domain. The stretch at 66–166 (AQDQEHQVEL…NALHQRHTEM (101 aa)) forms a coiled coil. Residues Ser-109, Ser-183, Ser-185, Ser-194, and Ser-203 each carry the phosphoserine modification. Residues 203–308 (SLGIFPLPAG…EGFVKGTDTS (106 aa)) are disordered. Thr-217 bears the Phosphothreonine mark. Residues 236–248 (ELSQPRSHTSLKV) are compositionally biased toward polar residues. 5 positions are modified to phosphoserine: Ser-238, Ser-251, Ser-265, Ser-268, and Ser-272. Positions 266-285 (DISQGGSKATTPASTANSDV) are enriched in polar residues. Thr-292 carries the post-translational modification Phosphothreonine. Residues Ser-311, Ser-329, Ser-332, and Ser-347 each carry the phosphoserine modification. A compositionally biased stretch (polar residues) spans 322-332 (AQETRNVSTES). The interval 322–341 (AQETRNVSTESGENEEKSEV) is disordered. Phosphothreonine occurs at positions 348, 365, and 418. Residues 408-534 (REVENLILEN…LQEAVRWTEM (127 aa)) are a coiled coil. Positions 473-489 (LRKARAEAEDARQKAKD) are enriched in basic and acidic residues. 2 disordered regions span residues 473-500 (LRKA…TAQR) and 563-600 (SSNA…SQLP). An RH2 domain is found at 500 to 604 (RKRFTRVEMA…TLSQLPGDKS (105 aa)). Residue Thr-586 is modified to Phosphothreonine. At Ser-588 the chain carries Phosphoserine. At Thr-595 the chain carries Phosphothreonine. A phosphoserine mark is found at Ser-705, Ser-728, Ser-730, Ser-732, and Ser-733. Positions 724 to 758 (SKQRSASQSSLDKLDQELKEQQKEFKNQEELSSQV) form a coiled coil. The disordered stretch occupies residues 853 to 883 (TGAATSPSTNGASPVIEKPPEMETENSEVDE). Residues 855-864 (AATSPSTNGA) show a composition bias toward polar residues. The segment covering 874–883 (METENSEVDE) has biased composition (acidic residues). Ser-1188 bears the Phosphoserine mark. Positions 1239–1267 (PQSSSGGADLTADKAGSSAQEPSSQTPLK) are disordered. Polar residues predominate over residues 1255–1266 (SSAQEPSSQTPL). Thr-1264 bears the Phosphothreonine mark.

Belongs to the JIP scaffold family. As to quaternary structure, homodimer. The homodimer interacts with ARF6, forming a heterotetramer. Homooligomer. Interacts with MAX, MAPK8, MAPK14, MAP3K3, MYC, and MAP2K4. Interacts with KNS2. Interaction with KNS2 is important in the formation of ternary complex with MAPK8. Interacts with PIP4P1. Interacts with PIKFYVE. In terms of processing, phosphorylated by MAPK8 and MAPK14. Highly expressed in brain, kidney, liver, heart.

The protein localises to the cytoplasm. It is found in the perinuclear region. The protein resides in the lysosome membrane. Functionally, the JNK-interacting protein (JIP) group of scaffold proteins selectively mediates JNK signaling by aggregating specific components of the MAPK cascade to form a functional JNK signaling module. Regulates lysosomal positioning by acting as an adapter protein which links PIP4P1-positive lysosomes to the dynein-dynactin complex. Assists PIKFYVE selective functionality in microtubule-based endosome-to-TGN trafficking. The sequence is that of C-Jun-amino-terminal kinase-interacting protein 4 from Mus musculus (Mouse).